A 464-amino-acid polypeptide reads, in one-letter code: MASIALKTFTGLRQSSPENNSITLSKSLPFTQTHRRLRINASKSSPRVNGRNLRVAVVGGGPAGGAAAETLAKGGIETFLIERKMDNCKPCGGAIPLCMVGEFDLPLDIIDRKVTKMKMISPSNVAVDIGQTLKPHEYIGMVRREVLDAYLRDRAAEAGASVLNGLFLKMDMPKAPNAPYVLHYTAYDSKTNGAGEKRTLEVDAVIGADGANSRVAKSINAGDYEYAIAFQERIKISDDKMKYYENLAEMYVGDDVSPDFYGWVFPKCDHVAVGTGTVTHKADIKKFQLATRLRADSKITGGKIIRVEAHPIPEHPRPRRLQDRVALVGDAAGYVTKCSGEGIYFAAKSGRMCAEAIVEGSEMGKRMVDESDLRKYLEKWDKTYWPTYKVLDILQKVFYRSNPAREAFVEMCADEYVQKMTFDSYLYKKVAPGNPIEDLKLAVNTIGSLVRANALRREMDKLSV.

The transit peptide at 1 to 54 (MASIALKTFTGLRQSSPENNSITLSKSLPFTQTHRRLRINASKSSPRVNGRNLR) directs the protein to the chloroplast.

This sequence belongs to the geranylgeranyl reductase family. ChlP subfamily.

It localises to the plastid. The protein resides in the chloroplast. It carries out the reaction phytyl diphosphate + 3 NADP(+) = geranylgeranyl diphosphate + 3 NADPH + 3 H(+). It functions in the pathway porphyrin-containing compound metabolism; chlorophyll biosynthesis. Its pathway is cofactor biosynthesis; tocopherol biosynthesis. In terms of biological role, catalyzes the reduction of geranylgeranyl diphosphate to phytyl diphosphate, providing phytol for both tocopherol and chlorophyll synthesis. This chain is Geranylgeranyl diphosphate reductase, chloroplastic (CHLP), found in Nicotiana tabacum (Common tobacco).